Consider the following 175-residue polypeptide: Alpha-crystallin B chain (175 aa).

M1 is subject to N-acetylmethionine. At S19 the chain carries Phosphoserine. A glycan (O-linked (GlcNAc) serine) is linked at S41. Phosphoserine is present on residues S45 and S59. The sHSP domain occupies 56–164 (RAPSWIDTGL…PERTIPITRE (109 aa)). H83 lines the Zn(2+) pocket. An N6-acetyllysine modification is found at K92. Zn(2+)-binding residues include H104, E106, H111, and H119. The segment at 142 to 175 (VLTVNGPRRQASGPERTIPITREEKPAVTAAPKK) is disordered. K166 is modified (N6-acetyllysine). T170 is a glycosylation site (O-linked (GlcNAc) threonine).

Belongs to the small heat shock protein (HSP20) family. As to quaternary structure, heteromer composed of three CRYAA and one CRYAB subunits. Aggregates with homologous proteins, including the small heat shock protein HSPB1, to form large heteromeric complexes. Inter-subunit bridging via zinc ions enhances stability, which is crucial as there is no protein turn over in the lens. Interacts with HSPBAP1 and TTN/titin. Interacts with TMEM109; in the cellular response to DNA damage. Interacts with DES; binds rapidly during early stages of DES filament assembly and a reduced binding seen in the later stages. Interacts with TMED10; the interaction mediates the translocation from the cytoplasm into the ERGIC (endoplasmic reticulum-Golgi intermediate compartment) and thereby secretion. Interacts with ATP6V1A and with MTOR, forming a ternary complex.

It localises to the cytoplasm. Its subcellular location is the nucleus. The protein resides in the secreted. It is found in the lysosome. In terms of biological role, may contribute to the transparency and refractive index of the lens. Has chaperone-like activity, preventing aggregation of various proteins under a wide range of stress conditions. In lens epithelial cells, stabilizes the ATP6V1A protein, preventing its degradation by the proteasome. In Sus scrofa (Pig), this protein is Alpha-crystallin B chain (CRYAB).